We begin with the raw amino-acid sequence, 593 residues long: NADH-quinone oxidoreductase subunit C/D (593 aa).

Residues 1 to 184 (MTADSALYIP…DPYSLSAAKQ (184 aa)) are NADH dehydrogenase I subunit C. The interval 208-593 (DYMFLNLGPN…IDFVMADVDR (386 aa)) is NADH dehydrogenase I subunit D.

This sequence in the N-terminal section; belongs to the complex I 30 kDa subunit family. The protein in the C-terminal section; belongs to the complex I 49 kDa subunit family. As to quaternary structure, NDH-1 is composed of 13 different subunits. Subunits NuoB, CD, E, F, and G constitute the peripheral sector of the complex.

It localises to the cell inner membrane. It carries out the reaction a quinone + NADH + 5 H(+)(in) = a quinol + NAD(+) + 4 H(+)(out). Functionally, NDH-1 shuttles electrons from NADH, via FMN and iron-sulfur (Fe-S) centers, to quinones in the respiratory chain. The immediate electron acceptor for the enzyme in this species is believed to be ubiquinone. Couples the redox reaction to proton translocation (for every two electrons transferred, four hydrogen ions are translocated across the cytoplasmic membrane), and thus conserves the redox energy in a proton gradient. This chain is NADH-quinone oxidoreductase subunit C/D, found in Pseudomonas aeruginosa (strain UCBPP-PA14).